The primary structure comprises 72 residues: UPF0495 protein KLLA0D04334g (72 aa).

Residues 20 to 42 (PVELTPLFLAMGVALASGTWFSY) traverse the membrane as a helical segment.

This sequence belongs to the UPF0495 family.

The protein localises to the membrane. The protein is UPF0495 protein KLLA0D04334g of Kluyveromyces lactis (strain ATCC 8585 / CBS 2359 / DSM 70799 / NBRC 1267 / NRRL Y-1140 / WM37) (Yeast).